Here is a 91-residue protein sequence, read N- to C-terminus: uncharacterized protein (91 aa).

This is an uncharacterized protein from Rickettsia prowazekii (strain Madrid E).